Here is a 76-residue protein sequence, read N- to C-terminus: UPF0291 protein GWCH70_1239 (76 aa).

Residues 54 to 76 (VIDPNGNDVTPKKLKESQKSRLH) form a disordered region. The segment covering 63 to 76 (TPKKLKESQKSRLH) has biased composition (basic and acidic residues).

The protein belongs to the UPF0291 family.

It localises to the cytoplasm. The protein is UPF0291 protein GWCH70_1239 of Geobacillus sp. (strain WCH70).